A 604-amino-acid chain; its full sequence is Testis-expressed protein 13C-1 (604 aa).

Disordered stretches follow at residues E314–D337, P374–I397, C485–K523, and A538–C580. Residues Q322–N333 are compositionally biased toward polar residues. Over residues K544–L572 the composition is skewed to basic and acidic residues.

The protein belongs to the TEX13 family.

Functionally, plays a role in transcriptional repression. This chain is Testis-expressed protein 13C-1, found in Mus musculus (Mouse).